Consider the following 436-residue polypeptide: UPF0597 protein YhaM (436 aa).

The protein belongs to the UPF0597 family.

This Escherichia coli O6:H1 (strain CFT073 / ATCC 700928 / UPEC) protein is UPF0597 protein YhaM.